We begin with the raw amino-acid sequence, 231 residues long: Phosphatidylserine decarboxylase proenzyme (231 aa).

Ser188 functions as the Schiff-base intermediate with substrate; via pyruvic acid in the catalytic mechanism. Ser188 bears the Pyruvic acid (Ser); by autocatalysis mark.

The protein belongs to the phosphatidylserine decarboxylase family. PSD-A subfamily. In terms of assembly, heterodimer of a large membrane-associated beta subunit and a small pyruvoyl-containing alpha subunit. Pyruvate is required as a cofactor. Post-translationally, is synthesized initially as an inactive proenzyme. Formation of the active enzyme involves a self-maturation process in which the active site pyruvoyl group is generated from an internal serine residue via an autocatalytic post-translational modification. Two non-identical subunits are generated from the proenzyme in this reaction, and the pyruvate is formed at the N-terminus of the alpha chain, which is derived from the carboxyl end of the proenzyme. The post-translation cleavage follows an unusual pathway, termed non-hydrolytic serinolysis, in which the side chain hydroxyl group of the serine supplies its oxygen atom to form the C-terminus of the beta chain, while the remainder of the serine residue undergoes an oxidative deamination to produce ammonia and the pyruvoyl prosthetic group on the alpha chain.

The protein resides in the cell membrane. It carries out the reaction a 1,2-diacyl-sn-glycero-3-phospho-L-serine + H(+) = a 1,2-diacyl-sn-glycero-3-phosphoethanolamine + CO2. It functions in the pathway phospholipid metabolism; phosphatidylethanolamine biosynthesis; phosphatidylethanolamine from CDP-diacylglycerol: step 2/2. In terms of biological role, catalyzes the formation of phosphatidylethanolamine (PtdEtn) from phosphatidylserine (PtdSer). This is Phosphatidylserine decarboxylase proenzyme from Rickettsia bellii (strain OSU 85-389).